A 444-amino-acid polypeptide reads, in one-letter code: MPSSDVCKAGSHRHSGWIQSLKKPGPFNLDAPENPEETLKSAFSSKILIIGAGGLGCEILKDLALSGFRDLSVIDMDTIDITNLNRQFLFNESNIDEPKANVAASMIMKRIPSTVVTPFYGKIQDKTIEFYKEFKLIICGLDSVEARRWINSTLVAIAKTGDLIPLVDGGSEGLKGQARVIIPTITSCYECSLDMLTPKISYPICTLANTPRLPEHCVEWAYLLEWPRVFLNASVDSFSKQEVFEPLDGKNSNFEPDNIRHIDWLVKRSIERANKFQIPSSSINRFFVQGIVKRIIPAVASTNAIIAASCCNEALKILTESNPFLDNYMMYVGEDGAYTYTFNLEKRSDCPVCGVLSEVYDISASSTVTLKDILNHYSKSYNLQNPSVSTAAGTPLYLASPPALQVATSKNLSQPILSITSVDVNLVITDKNLSTSLSVQLREC.

Glycine 54 to threonine 78 contacts ATP. The Glycyl thioester intermediate role is filled by cysteine 205.

It belongs to the ubiquitin-activating E1 family. UBA3 subfamily. As to quaternary structure, heterodimer of uba3 and ula1. Interacts with NEDD8 and ubc12. Interacts with but1 and but2.

It catalyses the reaction ATP + [NEDD8 protein] + [E1 NEDD8-activating enzyme]-L-cysteine = AMP + diphosphate + [E1 NEDD8-activating enzyme]-S-[NEDD8 protein]-yl-L-cysteine.. The protein operates within protein modification; protein neddylation. Catalytic subunit of the dimeric uba3-ula1 E1 enzyme. E1 activates NEDD8/ubl1 by first adenylating its C-terminal glycine residue with ATP, thereafter linking this residue to the side chain of the catalytic cysteine, yielding a NEDD8-uba3 thioester and free AMP. E1 finally transfers NEDD8 to the catalytic cysteine of ubc12. This Schizosaccharomyces pombe (strain 972 / ATCC 24843) (Fission yeast) protein is NEDD8-activating enzyme E1 catalytic subunit (uba3).